Reading from the N-terminus, the 160-residue chain is MLDIVLYEPEIPQNTGNIIRLCANTGFRLHLIEPLGFTWDDKRLRRSGLDYHEFAEIKRHKTFEAFLESEKPKRLFALTTKGCPAHSQVKFKLGDYLMFGPETRGIPMSILNEMPMEQKIRIPMTANSRSMNLSNSVAVTVYEAWRQLGYKGAVNLPEVK.

Positions 78, 100, 122, and 130 each coordinate S-adenosyl-L-methionine.

This sequence belongs to the class IV-like SAM-binding methyltransferase superfamily. RNA methyltransferase TrmH family. TrmL subfamily. In terms of assembly, homodimer.

It localises to the cytoplasm. The enzyme catalyses cytidine(34) in tRNA + S-adenosyl-L-methionine = 2'-O-methylcytidine(34) in tRNA + S-adenosyl-L-homocysteine + H(+). The catalysed reaction is 5-carboxymethylaminomethyluridine(34) in tRNA(Leu) + S-adenosyl-L-methionine = 5-carboxymethylaminomethyl-2'-O-methyluridine(34) in tRNA(Leu) + S-adenosyl-L-homocysteine + H(+). Its function is as follows. Methylates the ribose at the nucleotide 34 wobble position in the two leucyl isoacceptors tRNA(Leu)(CmAA) and tRNA(Leu)(cmnm5UmAA). Catalyzes the methyl transfer from S-adenosyl-L-methionine to the 2'-OH of the wobble nucleotide. The protein is tRNA (cytidine(34)-2'-O)-methyltransferase of Haemophilus influenzae (strain ATCC 51907 / DSM 11121 / KW20 / Rd).